Here is a 450-residue protein sequence, read N- to C-terminus: Beclin-1 (450 aa).

M1 carries the post-translational modification N-acetylmethionine. Phosphoserine is present on residues S15 and S30. The disordered stretch occupies residues 48 to 72 (TTAQAKPGETQEEETNSGEEPFIET). A phosphoserine; by AMPK mark is found at S90, S93, and S96. The BH3 signature appears at 108–127 (TMENLSRRLKVTGDLFDIMS). The tract at residues 112–159 (LSRRLKVTGDLFDIMSGQTDVDHPLCEECTDTLLDQLDTQLNVTENEC) is interaction with BCL2 and BCL2L1. Phosphothreonine; by DAPK1 is present on T119. Positions 142-269 (DTLLDQLDTQ…QLDKLKKTNV (128 aa)) form a coiled coil. Residues 245–450 (DELKSVENQM…AWVSSQFYNK (206 aa)) are evolutionary conserved domain (ECD). Glycyl lysine isopeptide (Lys-Gly) (interchain with G-Cter in ubiquitin) cross-links involve residues K402 and K437. A required for membrane-association region spans residues 425-450 (WTKALKFMLTNLKWGLAWVSSQFYNK).

It belongs to the beclin family. As to quaternary structure, a homodimeric form is proposed to exist; this metastable form readily transits to ATG14- or UVRAG-containing complexes with BECN1:UVRAG being more stable than BECN1:ATG14. Component of the PI3K (PI3KC3/PI3K-III/class III phosphatidylinositol 3-kinase) complex the core of which is composed of the catalytic subunit PIK3C3, the regulatory subunit PIK3R4 and BECN1 associating with additional regulatory/auxiliary subunits to form alternative complex forms. Alternative complex forms containing a fourth regulatory subunit in a mutually exclusive manner are PI3K complex I (PI3KC3-C1) containing ATG14, and PI3K complex II (PI3KC3-C2) containing UVRAG. PI3KC3-C1 displays a V-shaped architecture with PIK3R4 serving as a bridge between PIK3C3 and the ATG14:BECN1 subcomplex. Both, PI3KC3-C1 and PI3KC3-C2, can associate with further regulatory subunits, such as RUBCN, SH3GLB1/Bif-1 and AMBRA1. PI3KC3-C1 probably associates with PIK3CB. Forms a complex with PPP2CA and AMBRA1; AMBRA1 and BECN1 components of the complex regulate MYC stability via different pathways. Component of the complex, at least composed of LRPPRC, BECN1 and BCL2; the interactions prevent BECN1 from forming an autophagy-inducing complex with PIK3C3. Interacts with AMBRA1, GOPC, GRID2. Interacts with BCL2 and BCL2L1 isoform Bcl-X(L); the interaction inhibits BECN1 function in promoting autophagy by interfering with the formation of the PI3K complex. Interacts with cytosolic HMGB1; inhibits the interaction of BECN1 and BCL2 leading to promotion of autophagy. Interacts with USP10, USP13, VMP1, DAPK1, RAB39A. Interacts with the poly-Gln domain of ATXN3; the interaction causes deubiquitination at Lys-402 and stabilizes BECN1. Interacts with SLAMF1. Interacts with TRIM5; the interaction causes activation of BECN1 by causing its dissociation from its inhibitors BCL2 and TAB2. Interacts with active ULK1 (phosphorylated on 'Ser-317') and MEFV simultaneously. Interacts with WDR81 and WDR91; negatively regulates the PI3 kinase/PI3K activity associated with endosomal membranes. Interacts with LAPTM4B; competes with EGFR for LAPTM4B binding; regulates EGFR activity. Interacts with TRIM50. Interacts with TRIM16. Interacts with ATG14; this interaction is increased in the absence of TMEM39A. Interacts with WASHC1; preventing interaction with AMBRA1 and the DCX(AMBRA1) complex and subsequent ubiquitination. Interacts with TRIM17. Interacts with BCL2L10/BCL-B (via BH1 domain). Interacts with SH3BGRL. Interacts with IRGM; enhancing BECN1-interacting partners and influencing the composition of the BECN1 complex. Interacts with ARMC3. Interacts with LRPPRC. Post-translationally, phosphorylation at Thr-119 by DAPK1 reduces its interaction with BCL2 and BCL2L1 and promotes induction of autophagy. In response to autophagic stimuli, phosphorylated at serine residues by AMPK in an ATG14-dependent manner, and this phosphorylation is critical for maximally efficient autophagy. Polyubiquitinated by NEDD4, both with 'Lys-11'- and 'Lys-63'-linkages. 'Lys-11'-linked polyubiquitination leads to degradation and is enhanced when the stabilizing interaction partner VPS34 is depleted. Deubiquitinated by USP10 and USP13, leading to stabilize the PIK3C3/VPS34-containing complexes. Polyubiquitinated at Lys-402 with 'Lys-48'-linkages. 'Lys-48'-linked polyubiquitination of Lys-402 leads to degradation. Deubiquitinated by ATXN3, leading to stabilization. Ubiquitinated at Lys-437 via 'Lys-63'-linkage by the DCX(AMBRA1) complex, thereby increasing the association between BECN1 and PIK3C3 to promote PIK3C3 activity. 'Lys-48'-linked ubiquitination by RNF216 leads to proteasomal degradation and autophagy inhibition. In terms of processing, proteolytically processed by caspases including CASP8 and CASP3; the C-terminal fragments lack autophagy-inducing capacity and are proposed to induce apoptosis. Thus the cleavage is proposed to be an determinant to switch from autophagy to apoptosis pathways affecting cellular homeostasis including viral infections and survival of tumor cells.

The protein localises to the cytoplasm. It localises to the golgi apparatus. Its subcellular location is the trans-Golgi network membrane. The protein resides in the endosome membrane. It is found in the endoplasmic reticulum membrane. The protein localises to the mitochondrion membrane. It localises to the cytoplasmic vesicle. Its subcellular location is the autophagosome. The protein resides in the mitochondrion. It is found in the nucleus. Functionally, plays a central role in autophagy. Acts as a core subunit of the PI3K complex that mediates formation of phosphatidylinositol 3-phosphate; different complex forms are believed to play a role in multiple membrane trafficking pathways: PI3KC3-C1 is involved in initiation of autophagosomes and PI3KC3-C2 in maturation of autophagosomes and endocytosis. Involved in regulation of degradative endocytic trafficking and required for the abscission step in cytokinesis, probably in the context of PI3KC3-C2. Essential for the formation of PI3KC3-C2 but not PI3KC3-C1 PI3K complex forms. Involved in endocytosis. May play a role in antiviral host defense. Its function is as follows. Beclin-1-C 35 kDa localized to mitochondria can promote apoptosis; it induces the mitochondrial translocation of BAX and the release of proapoptotic factors. This Pongo abelii (Sumatran orangutan) protein is Beclin-1 (BECN1).